A 165-amino-acid chain; its full sequence is SsrA-binding protein (165 aa).

It belongs to the SmpB family.

The protein resides in the cytoplasm. Required for rescue of stalled ribosomes mediated by trans-translation. Binds to transfer-messenger RNA (tmRNA), required for stable association of tmRNA with ribosomes. tmRNA and SmpB together mimic tRNA shape, replacing the anticodon stem-loop with SmpB. tmRNA is encoded by the ssrA gene; the 2 termini fold to resemble tRNA(Ala) and it encodes a 'tag peptide', a short internal open reading frame. During trans-translation Ala-aminoacylated tmRNA acts like a tRNA, entering the A-site of stalled ribosomes, displacing the stalled mRNA. The ribosome then switches to translate the ORF on the tmRNA; the nascent peptide is terminated with the 'tag peptide' encoded by the tmRNA and targeted for degradation. The ribosome is freed to recommence translation, which seems to be the essential function of trans-translation. The protein is SsrA-binding protein of Parvibaculum lavamentivorans (strain DS-1 / DSM 13023 / NCIMB 13966).